The sequence spans 186 residues: uncharacterized protein (186 aa).

The 173-residue stretch at 12 to 184 folds into the N-acetyltransferase domain; it reads LLKSPVEEDD…HIYKLSKQIR (173 aa).

Belongs to the acetyltransferase family.

It is found in the cytoplasm. Its subcellular location is the nucleus. This is an uncharacterized protein from Schizosaccharomyces pombe (strain 972 / ATCC 24843) (Fission yeast).